A 190-amino-acid chain; its full sequence is Putative manganese efflux pump MntP (190 aa).

Helical transmembrane passes span 3-23 (PISLLFLALAMSTDAFAAALG), 41-61 (LIFGAIETITPVIGWGIGQVA), 69-89 (DHWIAFTLLLVLGLHMIYNGI), 105-125 (FWILAVTAFATSIDALAVGVG), 133-153 (IVVAALAIGLATTVMVTIGVM), and 168-188 (IIGGIVLIVVGATILYEHLSA).

It belongs to the MntP (TC 9.B.29) family.

It localises to the cell inner membrane. Probably functions as a manganese efflux pump. The sequence is that of Putative manganese efflux pump MntP from Pseudomonas syringae pv. syringae (strain B728a).